Here is a 291-residue protein sequence, read N- to C-terminus: Glycolipid transfer protein domain-containing protein 2 (291 aa).

A glycan (N-linked (GlcNAc...) asparagine) is linked at N276.

This sequence belongs to the GLTP family.

This is Glycolipid transfer protein domain-containing protein 2 (GLTPD2) from Homo sapiens (Human).